We begin with the raw amino-acid sequence, 70 residues long: Sec-independent protein translocase protein TatA (70 aa).

The chain crosses the membrane as a helical span at residues 1–21; sequence MGSFSIWHWLIVLVVVALLFG. The disordered stretch occupies residues 45 to 70; that stretch reads KGESEQAEDETAKPLPKERDKDSARG.

The protein belongs to the TatA/E family. As to quaternary structure, the Tat system comprises two distinct complexes: a TatABC complex, containing multiple copies of TatA, TatB and TatC subunits, and a separate TatA complex, containing only TatA subunits. Substrates initially bind to the TatABC complex, which probably triggers association of the separate TatA complex to form the active translocon.

Its subcellular location is the cell inner membrane. In terms of biological role, part of the twin-arginine translocation (Tat) system that transports large folded proteins containing a characteristic twin-arginine motif in their signal peptide across membranes. TatA could form the protein-conducting channel of the Tat system. The chain is Sec-independent protein translocase protein TatA from Phenylobacterium zucineum (strain HLK1).